Here is a 312-residue protein sequence, read N- to C-terminus: Olfactory receptor 6C75 (312 aa).

At 1–23 (MRNSTAVTDFILLGLTSDPQWQV) the chain is on the extracellular side. Residue Asn3 is glycosylated (N-linked (GlcNAc...) asparagine). The chain crosses the membrane as a helical span at residues 24–44 (VLFIFLLVTYMLSVTGNLIII). Over 45 to 63 (TLTLSDPHLQTPMYFFLRN) the chain is Cytoplasmic. Residues 64-84 (FSFLEISFTSVCIPRFLVTVV) form a helical membrane-spanning segment. Over 85–95 (TGNRTISYNGC) the chain is Extracellular. Cys95 and Cys177 are disulfide-bonded. A helical membrane pass occupies residues 96-116 (VAQLFFFIFLGVTEFYLLAAM). The Cytoplasmic portion of the chain corresponds to 117–140 (SYDRCMAICKPLHYTIIMSTRVCT). A helical transmembrane segment spans residues 141 to 161 (LLVFSSWLAGFLIIFPPVMLL). The Extracellular segment spans residues 162-194 (LQLDFCASNVIDHFICDSSPMLQLSCTNTHFLE). Residues 195 to 215 (LMAFFLAVVTLMVTLTLVILS) form a helical membrane-spanning segment. Topologically, residues 216-237 (YTNIIRTILKIPSMSQRKKAFS) are cytoplasmic. A helical membrane pass occupies residues 238-258 (TCSSHMIVVSISYSSCIFMYI). Residues 259–269 (KTSARERVTLS) are Extracellular-facing. Residues 270 to 290 (KGVAVLNTSVAPLLNPFIYTL) form a helical membrane-spanning segment. The Cytoplasmic segment spans residues 291 to 312 (RNKQVKQAFKSMVQKMIFSLNK).

Belongs to the G-protein coupled receptor 1 family.

Its subcellular location is the cell membrane. In terms of biological role, odorant receptor. The chain is Olfactory receptor 6C75 (OR6C75) from Homo sapiens (Human).